The primary structure comprises 577 residues: MRALTAAVLFVAGLTPVLAQDSSPTGPTFPNTVANCNAWYTIVKGDGCDTVEKKFKITPEQFFKWNPDVSTDCVKNFWVGNSYCVGVGKVVSSSKTSTTVKSSSTTQKTSSTSSKLSSSSKPVNTTTTPYSTRNPVTSYNLTQPYTATSLPPAKTQSGQPAYCNQWHWVGTGDTCLTILNLYGSRLTQEQLIIQHSEATALARTSYSVPWTSSQGNATVPAPTDYTPPVKTIVANFTASPQMTGVPQSCQNFYQAQDGDTCDVILKQFDYISREQFFSWNPALQGNCNGLWVGYYYCVANFATGVIPMPPTVTKVPDGAPTAINTCNKWYQAVGNDDCDAITTYFGTFSKSDFIKWNPSVYQDCSGLKTDSWYCVGIPGTPTTRTKPLTTTSLGSLPTQTGISASCKQYWLVSPSDTCASIISNAGVSADDFYKWNPALGGSACKGLQPNYYVCVSLTAAPTDSGSTTTITGPPTKGSNPPTTTTSGGGGGTIQTPSPIMPGMIGGCVRFWFRGKDGASLFCADIAKDAGVSLPDFLKWNPGVGSNCESLWADTWYCVGVSGKPTTMSSGIPTPASK.

The first 19 residues, 1–19 (MRALTAAVLFVAGLTPVLA), serve as a signal peptide directing secretion. The region spanning 38-85 (AWYTIVKGDGCDTVEKKFKITPEQFFKWNPDVSTDCVKNFWVGNSYCV) is the LysM 1 domain. A compositionally biased stretch (low complexity) spans 96–121 (TSTTVKSSSTTQKTSSTSSKLSSSSK). Positions 96 to 135 (TSTTVKSSSTTQKTSSTSSKLSSSSKPVNTTTTPYSTRNP) are disordered. Residues 122 to 135 (PVNTTTTPYSTRNP) show a composition bias toward polar residues. N-linked (GlcNAc...) asparagine glycosylation is found at asparagine 124, asparagine 140, asparagine 216, and asparagine 235. LysM domains are found at residues 251–298 (NFYQ…YYCV), 328–375 (KWYQ…WYCV), and 408–455 (QYWL…YVCV). The span at 464 to 485 (SGSTTTITGPPTKGSNPPTTTT) shows a compositional bias: low complexity. Residues 464 to 490 (SGSTTTITGPPTKGSNPPTTTTSGGGG) form a disordered region. One can recognise a LysM 5 domain in the interval 510 to 558 (FWFRGKDGASLFCADIAKDAGVSLPDFLKWNPGVGSNCESLWADTWYCV).

Belongs to the secreted LysM effector family.

Functionally, might have a role in sequestration of chitin oligosaccharides (breakdown products of fungal cell walls that are released during invasion and act as triggers of host immunity) to dampen host defense. This is Secreted LysM effector Lys4 from Pochonia chlamydosporia (strain 123) (Metacordyceps chlamydosporia).